A 270-amino-acid polypeptide reads, in one-letter code: 4-hydroxy-tetrahydrodipicolinate reductase (270 aa).

Residues 9–14 (GAGGRM) and E35 each bind NAD(+). R36 is an NADP(+) binding site. NAD(+) is bound by residues 99–101 (GTT) and 123–126 (ASNF). Catalysis depends on H156, which acts as the Proton donor/acceptor. H157 is a binding site for (S)-2,3,4,5-tetrahydrodipicolinate. K160 (proton donor) is an active-site residue. (S)-2,3,4,5-tetrahydrodipicolinate is bound at residue 166-167 (GT).

Belongs to the DapB family.

The protein localises to the cytoplasm. The enzyme catalyses (S)-2,3,4,5-tetrahydrodipicolinate + NAD(+) + H2O = (2S,4S)-4-hydroxy-2,3,4,5-tetrahydrodipicolinate + NADH + H(+). It carries out the reaction (S)-2,3,4,5-tetrahydrodipicolinate + NADP(+) + H2O = (2S,4S)-4-hydroxy-2,3,4,5-tetrahydrodipicolinate + NADPH + H(+). Its pathway is amino-acid biosynthesis; L-lysine biosynthesis via DAP pathway; (S)-tetrahydrodipicolinate from L-aspartate: step 4/4. Functionally, catalyzes the conversion of 4-hydroxy-tetrahydrodipicolinate (HTPA) to tetrahydrodipicolinate. The sequence is that of 4-hydroxy-tetrahydrodipicolinate reductase from Haemophilus influenzae (strain PittEE).